The sequence spans 137 residues: uncharacterized protein (137 aa).

This is an uncharacterized protein from Mycoplasma genitalium (strain ATCC 33530 / DSM 19775 / NCTC 10195 / G37) (Mycoplasmoides genitalium).